A 155-amino-acid polypeptide reads, in one-letter code: MSEADQKPVIIHTDGACSGNPGPGGWGAILKFGDVEKELKGGEPHTTNNRMELLAAISALEALTRPCSVDLYTDSQYVKNGIGSWIHNWKRNGWKTADKKPVKNVDLWQRLDAALKTHSIRWHWVKGHAGHAENERADQLARDGLTENRMKSRVK.

The RNase H type-1 domain occupies 5 to 146 (DQKPVIIHTD…ADQLARDGLT (142 aa)). Positions 14, 52, 74, and 138 each coordinate Mg(2+). A disordered region spans residues 133–155 (ENERADQLARDGLTENRMKSRVK).

Belongs to the RNase H family. In terms of assembly, monomer. Requires Mg(2+) as cofactor.

The protein resides in the cytoplasm. It carries out the reaction Endonucleolytic cleavage to 5'-phosphomonoester.. Functionally, endonuclease that specifically degrades the RNA of RNA-DNA hybrids. This chain is Ribonuclease H, found in Rhodopseudomonas palustris (strain ATCC BAA-98 / CGA009).